The following is a 45-amino-acid chain: Large ribosomal subunit protein bL36 (45 aa).

Residues methionine 1–lysine 45 are disordered.

It belongs to the bacterial ribosomal protein bL36 family.

The protein is Large ribosomal subunit protein bL36 of Chlamydia trachomatis serovar L2 (strain ATCC VR-902B / DSM 19102 / 434/Bu).